The sequence spans 381 residues: Spermidine/putrescine import ATP-binding protein PotA (381 aa).

An ABC transporter domain is found at 19–249; that stretch reads VELRKVFKVF…PESPFVADFI (231 aa). 51–58 contributes to the ATP binding site; it reads GPSGCGKT.

Belongs to the ABC transporter superfamily. Spermidine/putrescine importer (TC 3.A.1.11.1) family. The complex is composed of two ATP-binding proteins (PotA), two transmembrane proteins (PotB and PotC) and a solute-binding protein (PotD).

The protein resides in the cell inner membrane. The enzyme catalyses ATP + H2O + polyamine-[polyamine-binding protein]Side 1 = ADP + phosphate + polyamineSide 2 + [polyamine-binding protein]Side 1.. In terms of biological role, part of the ABC transporter complex PotABCD involved in spermidine/putrescine import. Responsible for energy coupling to the transport system. This chain is Spermidine/putrescine import ATP-binding protein PotA, found in Trichodesmium erythraeum (strain IMS101).